The primary structure comprises 33 residues: U-limacoditoxin(13)-As11 (33 aa).

An N-terminal signal peptide occupies residues 1–19 (MFKLLLVLALTMLAQSALA). Phe32 carries the phenylalanine amide modification.

Belongs to the FARP (FMRFamide related peptide) family. As to expression, expressed by the venom secretory cell of the spine. The spine is a cuticular structure containing a single large nucleated venom-secreting cell at its base. It is an independent unit capable of producing, storing and injecting venom. On the back of A.stimulea caterpillars, spines are grouped together by 50 to 100 to form scoli, of which there are eight.

Its subcellular location is the secreted. Functionally, is toxic when injected into Drosophila melanogaster. Also shows a low anthelmintic activity against the parasitic nematode H.contortus (drug susceptible Kirby isolate). This is U-limacoditoxin(13)-As11 from Acharia stimulea (Saddleback caterpillar moth).